The sequence spans 1761 residues: Lysine-specific demethylase 3B (1761 aa).

Ala2 is modified (N-acetylalanine). Positions 253–346 (DNSAPQSEGG…QRAKQPPSTF (94 aa)) are disordered. The segment covering 298–309 (ASKKLKGDRGEV) has biased composition (basic and acidic residues). N6-acetyllysine is present on Lys361. 2 disordered regions span residues 370–394 (QDEPVGGDTPASFTPYSTATGQTPL) and 438–496 (DTGL…NGVL). Composition is skewed to polar residues over residues 380-392 (ASFTPYSTATGQT), 453-468 (SRSQASGENSRNSILA), and 477-495 (PSSSQPLTFGSGRSQSNGV). Phosphoserine occurs at positions 492, 546, 556, and 560. Positions 572–603 (RSVLGTDTKPGSKAGSSVDRKVPAESMPTLTP) are disordered. Thr614 carries the phosphothreonine modification. A disordered region spans residues 714-762 (GPSLSAMGNGRSSSPTSSLTQPIEMPTLSSSPTEERPTVGPGQQDNPLL). A compositionally biased stretch (polar residues) spans 723–745 (GRSSSPTSSLTQPIEMPTLSSSP). Residues Ser766, Ser773, Ser778, and Ser779 each carry the phosphoserine modification. A Glycyl lysine isopeptide (Lys-Gly) (interchain with G-Cter in SUMO2) cross-link involves residue Lys788. The residue at position 798 (Ser798) is a Phosphoserine. Residues 805 to 827 (ACRQDSDSSTNSDLSDLSDSEEQ) are disordered. Residues 1031 to 1056 (CDVCETTLFNIHWVCRKCGFGVCLDC) form a C6-type zinc finger. Residues 1142–1161 (GMSQLPSINPSASSGNETTF) show a composition bias toward polar residues. The interval 1142–1220 (GMSQLPSINP…PCPDTAPPSS (79 aa)) is disordered. Positions 1174–1193 (EPDHVPKADSTDIRSEEPLK) are enriched in basic and acidic residues. A compositionally biased stretch (polar residues) spans 1194 to 1204 (TDSSASNSNSE). 2 positions are modified to phosphoserine: Ser1253 and Ser1259. The LXXLL motif signature appears at 1293-1297 (LRDLL). In terms of domain architecture, JmjC spans 1498-1721 (MPTRFEDLME…HCFRLTQEFR (224 aa)). His1560, Asp1562, and His1689 together coordinate Fe cation.

The protein belongs to the JHDM2 histone demethylase family. Fe(2+) serves as cofactor. Ubiquitous. Highly expressed in placenta, skeletal muscle, kidney, heart and liver.

The protein localises to the nucleus. It carries out the reaction N(6),N(6)-dimethyl-L-lysyl(9)-[histone H3] + 2 2-oxoglutarate + 2 O2 = L-lysyl(9)-[histone H3] + 2 formaldehyde + 2 succinate + 2 CO2. Histone demethylase that specifically demethylates 'Lys-9' of histone H3, thereby playing a central role in histone code. Demethylation of Lys residue generates formaldehyde and succinate. May have tumor suppressor activity. The sequence is that of Lysine-specific demethylase 3B (KDM3B) from Homo sapiens (Human).